The primary structure comprises 149 residues: Heavy metal-associated isoprenylated plant protein 21 (149 aa).

Positions 25–88 (LQTVDIKVKM…RVKSTGKKAE (64 aa)) constitute an HMA domain. A metal cation is bound by residues C36 and C39. C146 carries the post-translational modification Cysteine methyl ester. Residue C146 is the site of S-farnesyl cysteine attachment. Positions 147-149 (SIM) are cleaved as a propeptide — removed in mature form.

This sequence belongs to the HIPP family. As to quaternary structure, interacts with ZHD11/HB29. Expressed at low levels in leaves and sepals.

Its subcellular location is the membrane. Heavy-metal-binding protein. Binds cadmium. May be involved in cadmium transport and play a role in cadmium detoxification. The chain is Heavy metal-associated isoprenylated plant protein 21 from Arabidopsis thaliana (Mouse-ear cress).